We begin with the raw amino-acid sequence, 86 residues long: Large ribosomal subunit protein bL27 (86 aa).

Residues M1–K24 form a disordered region. A compositionally biased stretch (polar residues) spans S9–S19.

The protein belongs to the bacterial ribosomal protein bL27 family.

The protein is Large ribosomal subunit protein bL27 of Salinibacter ruber (strain DSM 13855 / M31).